Reading from the N-terminus, the 482-residue chain is ATP synthase subunit beta (482 aa).

ATP is bound at residue 162 to 169; it reads GGAGVGKT.

The protein belongs to the ATPase alpha/beta chains family. As to quaternary structure, F-type ATPases have 2 components, CF(1) - the catalytic core - and CF(0) - the membrane proton channel. CF(1) has five subunits: alpha(3), beta(3), gamma(1), delta(1), epsilon(1). CF(0) has four main subunits: a(1), b(1), b'(1) and c(9-12).

It localises to the cellular thylakoid membrane. It carries out the reaction ATP + H2O + 4 H(+)(in) = ADP + phosphate + 5 H(+)(out). Functionally, produces ATP from ADP in the presence of a proton gradient across the membrane. The catalytic sites are hosted primarily by the beta subunits. The protein is ATP synthase subunit beta of Nostoc punctiforme (strain ATCC 29133 / PCC 73102).